The chain runs to 264 residues: S-adenosylmethionine decarboxylase proenzyme (264 aa).

Ser-112 acts as the Schiff-base intermediate with substrate; via pyruvic acid in catalysis. Ser-112 bears the Pyruvic acid (Ser); by autocatalysis mark. Catalysis depends on His-117, which acts as the Proton acceptor; for processing activity. Cys-140 serves as the catalytic Proton donor; for catalytic activity.

Belongs to the prokaryotic AdoMetDC family. Type 2 subfamily. Heterooctamer of four alpha and four beta chains arranged as a tetramer of alpha/beta heterodimers. The cofactor is pyruvate. In terms of processing, is synthesized initially as an inactive proenzyme. Formation of the active enzyme involves a self-maturation process in which the active site pyruvoyl group is generated from an internal serine residue via an autocatalytic post-translational modification. Two non-identical subunits are generated from the proenzyme in this reaction, and the pyruvate is formed at the N-terminus of the alpha chain, which is derived from the carboxyl end of the proenzyme. The post-translation cleavage follows an unusual pathway, termed non-hydrolytic serinolysis, in which the side chain hydroxyl group of the serine supplies its oxygen atom to form the C-terminus of the beta chain, while the remainder of the serine residue undergoes an oxidative deamination to produce ammonia and the pyruvoyl group blocking the N-terminus of the alpha chain.

It carries out the reaction S-adenosyl-L-methionine + H(+) = S-adenosyl 3-(methylsulfanyl)propylamine + CO2. Its pathway is amine and polyamine biosynthesis; S-adenosylmethioninamine biosynthesis; S-adenosylmethioninamine from S-adenosyl-L-methionine: step 1/1. Catalyzes the decarboxylation of S-adenosylmethionine to S-adenosylmethioninamine (dcAdoMet), the propylamine donor required for the synthesis of the polyamines spermine and spermidine from the diamine putrescine. The protein is S-adenosylmethionine decarboxylase proenzyme of Salmonella arizonae (strain ATCC BAA-731 / CDC346-86 / RSK2980).